We begin with the raw amino-acid sequence, 174 residues long: Regenerating islet-derived protein 3-gamma (174 aa).

The first 26 residues, 1–26, serve as a signal peptide directing secretion; sequence MLPRITITIMSWMLLSCLMLLSQVQG. A propeptide spanning residues 27–37 is cleaved from the precursor; that stretch reads EVAKKDAPSSR. 3 cysteine pairs are disulfide-bonded: cysteine 40–cysteine 51, cysteine 68–cysteine 170, and cysteine 145–cysteine 162. The C-type lectin domain occupies 47-171; it reads YGSYCYALFS…CNLELPYVCK (125 aa). Positions 103 to 118 are sufficient to activate EXTL3; it reads WIGLHDPTLGYEPNRG. Histidine 107 serves as a coordination point for Zn(2+). An EPN motif is present at residues 114–116; that stretch reads EPN. Residues glutamate 121 and histidine 144 each contribute to the Zn(2+) site.

Forms a hexameric membrane-permeabilizing oligomeric pore on membrane phospholipids. The hexamer is formed by three dimers related by helical symmetry. Forms filaments, filamentation traps pore complexes and limits damage to host cells. Interacts with EXTL3. Post-translationally, proteolytic processing by trypsin removes an inhibitory N-terminal propeptide and is essential for peptidoglycan binding and antibacterial activity. Predominantly expressed in the small intestine, including Paneth cells (at protein level). Hardly detectable in the colon (at protein level). Highly expressed in the lung epithelium during methicillin-resistant S.aureus infection and allergic airway inflammation (at protein level). Skin injury increases its epidermal expression. Also expressed in the pancreas. Expressed by nocireceptors.

Its subcellular location is the secreted. It localises to the cytoplasm. Its activity is regulated as follows. Lipopolysaccharide inhibits pore-forming activity, explaining why is bactericidal for Gram-positive but not Gram-negative bacteria. Its function is as follows. Bactericidal C-type lectin which acts exclusively against Gram-positive bacteria and mediates bacterial killing by binding to surface-exposed carbohydrate moieties of peptidoglycan. Restricts bacterial colonization of the intestinal epithelial surface and consequently limits activation of adaptive immune responses by the microbiota. Functionally, acts as a hormone in response to different stimuli like anti-inflammatory signals, such as IL17A, or gut microbiome. Is secreted by different cell types to activate its receptor EXTL3 and induce cell specific signaling pathways. Induced by IL17A in keratinocytes, regulates keratinocyte proliferation and differentiation after skin injury. In parallel, inhibits skin inflammation through the inhibition of inflammatory cytokines such as IL6 and TNF. Induced by IL22 in lung epithelial cells, inhibits cytokine production and regulates allergic airway inflammation. Induced in small intestine by inulin-enriched diet and Lactobacillus gasseri enriched microbiome, plays a role in the improvement of gut barrier function, the regulation of energy balance and glucose levels. Modulates microbiota composition in duodenal contents. Produced by nociceptor in response to endotoxins, prevents endotoxic death by targeting kynurenine pathway in microglia. Has bacteriostatic activity. In terms of biological role, has bactericidal activity against L.monocytogenes and methicillin-resistant S.aureus. This chain is Regenerating islet-derived protein 3-gamma, found in Mus musculus (Mouse).